Consider the following 269-residue polypeptide: MSPFKIFFFTTLLVAAFSVSAADFNTDVNVAWGNGRGKILNNGQLLTLSLDKSSGSGFQSKTEYLFGKIDMQIKLVPGNSAGTVTTFYLKSEGSTWDEIDFEFLGNMSGDPYTLHTNVYTQGKGDKEQQFHLWFDPTANFHTYSILWNPQRIILTVDDTPIREFKNYESLGVLFPKNKPMRMYASLWNADDWATRGGLVKTDWSKAPFMASYRNIKIDSKPNSNWYTQEMDSTSQARLKWVQKNYMIYNYCTDHRRFPQGAPKECTTSS.

A signal peptide spans 1–21; it reads MSPFKIFFFTTLLVAAFSVSA. One can recognise a GH16 domain in the interval 22 to 212; that stretch reads ADFNTDVNVA…WSKAPFMASY (191 aa). The active-site Nucleophile is E98. The active-site Proton donor is E102. E102 contacts xyloglucan. N-linked (GlcNAc...) asparagine glycosylation occurs at N106. Residues 115 to 117, 125 to 127, 191 to 192, G196, and R256 each bind xyloglucan; these read HTN, DKE, and DW. Residues C251 and C265 are joined by a disulfide bond.

It belongs to the glycosyl hydrolase 16 family. XTH group 2 subfamily. Post-translationally, contains at least one intrachain disulfide bond essential for its enzymatic activity. In terms of processing, N-glycosylated; essential for its enzymatic activity. In terms of tissue distribution, highly expressed. Predominantly expressed in stems. Expressed in shoot apical meristems, also found in seedlings and meristems.

Its subcellular location is the secreted. The protein localises to the cell wall. The protein resides in the extracellular space. It localises to the apoplast. The enzyme catalyses breaks a beta-(1-&gt;4) bond in the backbone of a xyloglucan and transfers the xyloglucanyl segment on to O-4 of the non-reducing terminal glucose residue of an acceptor, which can be a xyloglucan or an oligosaccharide of xyloglucan.. In terms of biological role, catalyzes xyloglucan endohydrolysis (XEH) and/or endotransglycosylation (XET). Cleaves and religates xyloglucan polymers, an essential constituent of the primary cell wall, and thereby participates in cell wall construction of growing tissues. May be required during development to modify the walls of cells under mechanical stress. In Arabidopsis thaliana (Mouse-ear cress), this protein is Xyloglucan endotransglucosylase/hydrolase protein 24 (XTH24).